The following is a 376-amino-acid chain: T-box transcription factor 18 (376 aa).

A compositionally biased stretch (low complexity) spans 38–63 (STSRPSSSSPPSLPAVSSELLSSSFP). Residues 38 to 76 (STSRPSSSSPPSLPAVSSELLSSSFPTNAPESSSRDLAP) form a disordered region. Positions 171–364 (LANQEQWAKF…GNKYCRTDRK (194 aa)) form a DNA-binding region, T-box.

The protein resides in the nucleus. Its function is as follows. Transcriptional regulator involved in developmental processes. Directly binds to the promoter region of the sex-determining factor xol-1 to activate its transcription. Its activation of xol-1 transcription controls sex determination and X chromosome dosage compensation to promote male development. Has a role in the fox-1-sex-1-mediated determination of sexual fate. The protein is T-box transcription factor 18 of Caenorhabditis elegans.